The primary structure comprises 517 residues: Anthranilate--CoA ligase (517 aa).

161–172 (LQYTSGSTGAPK) contributes to the AMP binding site.

It belongs to the ATP-dependent AMP-binding enzyme family. Monomer.

The enzyme catalyses anthranilate + ATP + CoA = anthraniloyl-CoA + AMP + diphosphate. Its function is as follows. Catalyzes the formation of anthraniloyl-CoA, which is the priming step for entry into the Pseudomonas quinolone signal (PQS) biosynthetic pathway. Also active on a variety of aromatic substrates, including benzoate and chloro and fluoro derivatives of anthranilate. This Pseudomonas aeruginosa (strain ATCC 15692 / DSM 22644 / CIP 104116 / JCM 14847 / LMG 12228 / 1C / PRS 101 / PAO1) protein is Anthranilate--CoA ligase (pqsA).